A 617-amino-acid chain; its full sequence is Cell pattern formation-associated protein STUA (617 aa).

Positions 1–79 (MNQPAADMYY…PASQMGQNVL (79 aa)) are disordered. Over residues 24–34 (TVTSGAMSYHS) the composition is skewed to polar residues. Low complexity predominate over residues 45–58 (PQYAPQPQYSQYGY). Polar residues predominate over residues 61 to 76 (GLTSPQSAQPASQMGQ). The HTH APSES-type domain occupies 106-212 (RVTATLWEDE…HNIGALLYHP (107 aa)). The H-T-H motif DNA-binding region spans 140–161 (GTKLLNVAGMTRGRRDGILKSE). Disordered regions lie at residues 223 to 274 (AAAE…MGRP), 300 to 451 (SDSG…DSGA), and 463 to 617 (APAV…PRRR). Low complexity-rich tracts occupy residues 305–318 (QWAQ…AQGA) and 334–345 (PATPASTPPGTT). 2 stretches are compositionally biased toward polar residues: residues 346–361 (IQNM…QYDN) and 368–382 (PSAQ…NPAS). The segment covering 438-447 (EHDHDAEYTH) has biased composition (basic and acidic residues). The segment covering 488 to 509 (PASGRATPRTAAAPQPYYSQQA) has biased composition (low complexity). Polar residues-rich tracts occupy residues 519–533 (QQPS…SNDR) and 553–563 (SMSNGYASQMN). The tract at residues 569-593 (KRGRDEDDDLQRPSSGGGMDLKRRK) is nuclear localization domain. Residues 599 to 617 (QVPAMAYAPPVMAQQPRRR) show a composition bias toward low complexity.

The protein belongs to the EFG1/PHD1/stuA family.

The protein resides in the nucleus. Its function is as follows. Transcription factor that regulates asexual reproduction. Binds the StuA-response elements (StRE) with the consensus sequence 5'-(A/T)CGCG(T/A)N(A/C)-3' at the promoters of target genes. Required for the formation of aerial hyphae, efficient conidiation, and the formation of perithecia. Essential for the generation of normal turgor pressure within the appressorium. Required for infection of intact apple fruit and penetration of onion epidermal cells. The chain is Cell pattern formation-associated protein STUA from Colletotrichum gloeosporioides (Anthracnose fungus).